The chain runs to 72 residues: Large ribosomal subunit protein bL31 (72 aa).

Residues cysteine 16, cysteine 18, cysteine 37, and cysteine 40 each coordinate Zn(2+).

It belongs to the bacterial ribosomal protein bL31 family. Type A subfamily. In terms of assembly, part of the 50S ribosomal subunit. Requires Zn(2+) as cofactor.

Functionally, binds the 23S rRNA. The protein is Large ribosomal subunit protein bL31 of Hahella chejuensis (strain KCTC 2396).